Reading from the N-terminus, the 344-residue chain is uncharacterized protein (344 aa).

An N-terminal signal peptide occupies residues Met1–Ala27. In terms of domain architecture, GH18 spans Gly29–Lys344. The Proton donor role is filled by Glu140.

The protein belongs to the glycosyl hydrolase 18 family.

This is an uncharacterized protein from Bacillus subtilis (strain 168).